The primary structure comprises 688 residues: DNA ligase (688 aa).

NAD(+)-binding positions include 38-42 (DEEYD), 87-88 (SL), and Glu-118. The active-site N6-AMP-lysine intermediate is the Lys-120. The NAD(+) site is built by Arg-141, Glu-175, Lys-291, and Lys-315. Zn(2+)-binding residues include Cys-409, Cys-412, Cys-428, and Cys-433. Residues 590–679 (VKLDILRGLT…AELKGYNFDE (90 aa)) form the BRCT domain.

The protein belongs to the NAD-dependent DNA ligase family. LigA subfamily. Mg(2+) serves as cofactor. Requires Mn(2+) as cofactor.

It carries out the reaction NAD(+) + (deoxyribonucleotide)n-3'-hydroxyl + 5'-phospho-(deoxyribonucleotide)m = (deoxyribonucleotide)n+m + AMP + beta-nicotinamide D-nucleotide.. Its function is as follows. DNA ligase that catalyzes the formation of phosphodiester linkages between 5'-phosphoryl and 3'-hydroxyl groups in double-stranded DNA using NAD as a coenzyme and as the energy source for the reaction. It is essential for DNA replication and repair of damaged DNA. The sequence is that of DNA ligase from Thermotoga maritima (strain ATCC 43589 / DSM 3109 / JCM 10099 / NBRC 100826 / MSB8).